Reading from the N-terminus, the 161-residue chain is Phosphopantetheine adenylyltransferase (161 aa).

Ser-11 lines the substrate pocket. ATP-binding positions include Ser-11–Phe-12 and His-19. The substrate site is built by Lys-43, Leu-75, and Arg-89. Residues Gly-90–Arg-92, Glu-100, and Tyr-125–Ser-131 each bind ATP.

The protein belongs to the bacterial CoaD family. As to quaternary structure, homohexamer. The cofactor is Mg(2+).

Its subcellular location is the cytoplasm. The enzyme catalyses (R)-4'-phosphopantetheine + ATP + H(+) = 3'-dephospho-CoA + diphosphate. It functions in the pathway cofactor biosynthesis; coenzyme A biosynthesis; CoA from (R)-pantothenate: step 4/5. Reversibly transfers an adenylyl group from ATP to 4'-phosphopantetheine, yielding dephospho-CoA (dPCoA) and pyrophosphate. This chain is Phosphopantetheine adenylyltransferase, found in Citrifermentans bemidjiense (strain ATCC BAA-1014 / DSM 16622 / JCM 12645 / Bem) (Geobacter bemidjiensis).